A 366-amino-acid chain; its full sequence is BIIDXI-like protein At5g11420 (366 aa).

Residues 1 to 22 form the signal peptide; it reads MKGGSLSFLFVLLIATITSVIC. N-linked (GlcNAc...) asparagine glycosylation is found at Asn-98, Asn-122, and Asn-209.

In terms of assembly, interacts with PME3.

Its subcellular location is the secreted. The protein resides in the cell wall. In terms of biological role, together with BIIDXI, acts as a positive regulator of PME3 activity during several developmental processes, including seed germination and endosperm (testa) rupture at the micropyle, probably by modulating the pectin status in cell walls. This is BIIDXI-like protein At5g11420 from Arabidopsis thaliana (Mouse-ear cress).